Reading from the N-terminus, the 343-residue chain is Ribosomal RNA small subunit methyltransferase C (343 aa).

It belongs to the methyltransferase superfamily. RsmC family. In terms of assembly, monomer.

The protein resides in the cytoplasm. The catalysed reaction is guanosine(1207) in 16S rRNA + S-adenosyl-L-methionine = N(2)-methylguanosine(1207) in 16S rRNA + S-adenosyl-L-homocysteine + H(+). In terms of biological role, specifically methylates the guanine in position 1207 of 16S rRNA in the 30S particle. The polypeptide is Ribosomal RNA small subunit methyltransferase C (Escherichia coli O6:K15:H31 (strain 536 / UPEC)).